The following is a 486-amino-acid chain: 2-hydroxymuconic semialdehyde dehydrogenase (486 aa).

Active-site residues include glutamate 254 and cysteine 288.

It belongs to the aldehyde dehydrogenase family.

It carries out the reaction (2Z,4E)-2-hydroxy-6-oxohexa-2,4-dienoate + NAD(+) + H2O = (2Z,4E)-2-hydroxyhexa-2,4-dienedioate + NADH + 2 H(+). Its pathway is aromatic compound metabolism; benzoate degradation via hydroxylation. Its function is as follows. 2-hydroxymuconic acid semialdehyde can be converted to 2-hydroxypent-2,4-dienoate either directly by the action of 2-hydroxymuconic semialdehyde hydrolase (HMSH) or by the action of three sequential enzymes, the first of which is HMSD. In Pseudomonas sp. (strain CF600), this protein is 2-hydroxymuconic semialdehyde dehydrogenase (dmpC).